We begin with the raw amino-acid sequence, 135 residues long: Transcriptional activator protein (135 aa).

Positions 17-32 match the Nuclear localization signal motif; it reads KIQHHIAKKRQVRRRR. The segment at 37 to 54 is a zinc-finger region; sequence CGCSYYIHLDCINHGFTH. The tract at residues 120-135 is transactivation; sequence HLDDLTVSDWSFFKSL.

Belongs to the geminiviridae transcriptional activator protein family. Monomer. Homodimer. Homooligomer. Self-interaction correlates with nuclear localization and efficient activation of transcription. Monomers suppress local silencing by interacting with and inactivating host adenosine kinase 2 (ADK2) in the cytoplasm. Interacts with and inhibits host SNF1 kinase. Binds to ssDNA. In terms of processing, phosphorylated.

It localises to the host nucleus. Its subcellular location is the host cytoplasm. Its function is as follows. Strong activator of the late viral genes promoters. Acts as a suppressor of RNA-mediated gene silencing, also known as post-transcriptional gene silencing (PTGS), a mechanism of plant viral defense that limits the accumulation of viral RNAs. TrAP suppresses the host RNA silencing by inhibiting adenosine kinase 2 (ADK2), a kinase involved in a general methylation pathway. Also suppresses the host basal defense by interacting with and inhibiting SNF1 kinase, a key regulator of cell metabolism implicated in innate antiviral defense. Determines pathogenicity. The protein is Transcriptional activator protein of Tomato yellow leaf curl Sardinia virus (isolate Spain-2) (TYLCSV).